Here is a 128-residue protein sequence, read N- to C-terminus: Azurin (128 aa).

The Plastocyanin-like domain occupies 1 to 128; it reads AECKVTVDST…AMMKGTVTLK (128 aa). Residues C3 and C26 are joined by a disulfide bond. Residues H46, C112, H117, and M121 each coordinate Cu cation.

The protein localises to the periplasm. Transfers electrons from cytochrome c551 to cytochrome oxidase. In Pseudomonas fluorescens biotype C, this protein is Azurin.